Reading from the N-terminus, the 389-residue chain is Teichoic acid ribitol-phosphate primase (389 aa).

It belongs to the CDP-glycerol glycerophosphotransferase family.

Its subcellular location is the cell membrane. It catalyses the reaction 4-O-[(2R)-glycerylphospho]-N-acetyl-beta-D-mannosaminyl-(1-&gt;4)-N-acetyl-alpha-D-glucosaminyl di-trans,octa-cis-undecaprenyl diphosphate + CDP-L-ribitol = 4-O-[1-D-ribitylphospho-(2R)-1-glycerylphospho]-N-acetyl-beta-D-mannosaminyl-(1-&gt;4)-N-acetyl-alpha-D-glucosaminyl di-trans,octa-cis-undecaprenyl diphosphate + CMP + H(+). The protein operates within cell wall biogenesis; poly(ribitol phosphate) teichoic acid biosynthesis. Catalyzes the addition of a single ribitol phosphate unit onto the glycerol phosphate of the linkage unit, as a primer for polymerisation by TarL. The sequence is that of Teichoic acid ribitol-phosphate primase (tarK) from Bacillus spizizenii (strain ATCC 23059 / NRRL B-14472 / W23) (Bacillus subtilis subsp. spizizenii).